The chain runs to 95 residues: uncharacterized protein (95 aa).

This is an uncharacterized protein from Enterobacteria phage T4 (Bacteriophage T4).